The following is a 327-amino-acid chain: E3 ubiquitin ligase Rnf121 (327 aa).

5 consecutive transmembrane segments (helical) span residues 50-70 (MHAE…LLLV), 79-96 (SYNM…VYFT), 99-119 (LHWW…AYIT), 148-168 (ATGI…NLLF), and 173-193 (EDAM…GVLG). Residues 226 to 276 (CAVCGQQIFVDVNEEGIIENTYRLSCNHVFHEFCIRGWCIVGKKQTCPYCK) form an RING-type; atypical zinc finger.

Belongs to the RNF121 family.

Its subcellular location is the endoplasmic reticulum membrane. The enzyme catalyses S-ubiquitinyl-[E2 ubiquitin-conjugating enzyme]-L-cysteine + [acceptor protein]-L-lysine = [E2 ubiquitin-conjugating enzyme]-L-cysteine + N(6)-ubiquitinyl-[acceptor protein]-L-lysine.. It functions in the pathway protein modification; protein ubiquitination. E3 ubiquitin ligase which accepts ubiquitin and transfers it to substrates thereby promoting their degradation by the endoplasmic reticulum-associated degradation (ERAD) pathway which is a pathway involved in ubiquitin-dependent degradation of misfolded endoplasmic reticulum proteins. May regulate the unfolded protein response to reduce endoplasmic reticulum stress. The sequence is that of E3 ubiquitin ligase Rnf121 (rnf121) from Xenopus laevis (African clawed frog).